A 314-amino-acid chain; its full sequence is Methionyl-tRNA formyltransferase (314 aa).

111–114 serves as a coordination point for (6S)-5,6,7,8-tetrahydrofolate; it reads SLLP.

It belongs to the Fmt family.

The catalysed reaction is L-methionyl-tRNA(fMet) + (6R)-10-formyltetrahydrofolate = N-formyl-L-methionyl-tRNA(fMet) + (6S)-5,6,7,8-tetrahydrofolate + H(+). Its function is as follows. Attaches a formyl group to the free amino group of methionyl-tRNA(fMet). The formyl group appears to play a dual role in the initiator identity of N-formylmethionyl-tRNA by promoting its recognition by IF2 and preventing the misappropriation of this tRNA by the elongation apparatus. The protein is Methionyl-tRNA formyltransferase of Chlorobium luteolum (strain DSM 273 / BCRC 81028 / 2530) (Pelodictyon luteolum).